The sequence spans 1362 residues: DNA-directed RNA polymerase subunit beta (1362 aa).

Belongs to the RNA polymerase beta chain family. In terms of assembly, the RNAP catalytic core consists of 2 alpha, 1 beta, 1 beta' and 1 omega subunit. When a sigma factor is associated with the core the holoenzyme is formed, which can initiate transcription.

The catalysed reaction is RNA(n) + a ribonucleoside 5'-triphosphate = RNA(n+1) + diphosphate. Its function is as follows. DNA-dependent RNA polymerase catalyzes the transcription of DNA into RNA using the four ribonucleoside triphosphates as substrates. The sequence is that of DNA-directed RNA polymerase subunit beta from Acinetobacter baumannii (strain AB307-0294).